A 478-amino-acid chain; its full sequence is Odorant receptor coreceptor (478 aa).

At Met1–Lys41 the chain is on the cytoplasmic side. Residues Val42–Leu62 form a helical membrane-spanning segment. The Extracellular portion of the chain corresponds to Ala63–Thr73. A helical membrane pass occupies residues Ala74–Val94. Residues Asn95–Leu133 lie on the Cytoplasmic side of the membrane. Residues Leu134–Phe154 traverse the membrane as a helical segment. At Gly155 to Met188 the chain is on the extracellular side. Asn167 carries N-linked (GlcNAc...) asparagine glycosylation. A helical membrane pass occupies residues Ser189–Val209. Over Gln210–Lys338 the chain is Cytoplasmic. A helical transmembrane segment spans residues His339–Thr361. At Ser362 to Tyr382 the chain is on the extracellular side. Residues Gly383–Phe403 form a helical membrane-spanning segment. At Gly404 to Thr454 the chain is on the cytoplasmic side. Residues Val455–Val475 traverse the membrane as a helical segment. Residues Gln476 to Lys478 lie on the Extracellular side of the membrane.

The protein belongs to the insect chemoreceptor superfamily. Heteromeric odorant receptor channel (TC 1.A.69) family. Orco subfamily. In terms of assembly, heterodimer with conventional odorant receptors (ORs). Complexes exist early in the endomembrane system in olfactory sensory neurons (OSNs), coupling these complexes to the conserved ciliary trafficking pathway. In terms of tissue distribution, expressed in olfactory and gustatory organs of both adult and immature stages. Highest expression is seen in adult antennae and the maxillary palps. Lower expression also seen in proboscis and legs. Within the antenna, expression originates in cell bodies and projects into the lumen of an individual sensillum, presumably along the dendritic extension of the neuron. Within the maxillary palps, expression is seen in a small number of cell bodies and in projections into the sensillar cone. Within the probiscus, expression is seen in a single type of sensillum on the outer surface of the labellar lobes.

Its subcellular location is the cell membrane. Functionally, odorant coreceptor which complexes with conventional odorant receptors (ORs) to form odorant-sensing units, providing sensitive and prolonged odorant signaling and calcium permeability. Orco is a universal and integral part of the functional odorant receptor, involved in the dendritic localization of other olfactory receptors. Can form functional ion channels in the absence of an odor-binding OR. Plays a key role in preferred attraction of females for humans over non-human hosts for blood feeding. Human attraction plays a crucial role in the transmission of Plasmodium protozoans by the mosquito leading to infection diseases like malaria. Also required for the response to N,N-Diethyl-meta-toluamide (DEET), the most widely used insect repellent worldwide. The chain is Odorant receptor coreceptor (Orco) from Anopheles gambiae (African malaria mosquito).